We begin with the raw amino-acid sequence, 314 residues long: Malate dehydrogenase (314 aa).

Residues 11-16 (GSGNIG) and aspartate 35 each bind NAD(+). The substrate site is built by arginine 84 and arginine 90. Residues asparagine 97 and 120-122 (ITN) contribute to the NAD(+) site. Substrate-binding residues include asparagine 122 and arginine 153. The active-site Proton acceptor is histidine 177.

It belongs to the LDH/MDH superfamily. MDH type 3 family.

It carries out the reaction (S)-malate + NAD(+) = oxaloacetate + NADH + H(+). Catalyzes the reversible oxidation of malate to oxaloacetate. This is Malate dehydrogenase from Rickettsia canadensis (strain McKiel).